The primary structure comprises 476 residues: Eukaryotic translation initiation factor 3 subunit L (476 aa).

Residues 257–452 (DAIRMFSHIL…DLDYALENDL (196 aa)) form the PCI domain.

This sequence belongs to the eIF-3 subunit L family. As to quaternary structure, component of the eukaryotic translation initiation factor 3 (eIF-3) complex.

It localises to the cytoplasm. Functionally, component of the eukaryotic translation initiation factor 3 (eIF-3) complex, which is involved in protein synthesis of a specialized repertoire of mRNAs and, together with other initiation factors, stimulates binding of mRNA and methionyl-tRNAi to the 40S ribosome. The eIF-3 complex specifically targets and initiates translation of a subset of mRNAs involved in cell proliferation. The protein is Eukaryotic translation initiation factor 3 subunit L of Aspergillus fumigatus (strain CBS 144.89 / FGSC A1163 / CEA10) (Neosartorya fumigata).